A 185-amino-acid polypeptide reads, in one-letter code: Heavy metal-associated isoprenylated plant protein 11 (185 aa).

An HMA domain is found at 39 to 106 (QQNTNVVFKL…ICKHVAIIAA (68 aa)). A compositionally biased stretch (basic and acidic residues) spans 109–158 (IREPEQNRNPVTRREPNREPEQNRSRVTRREPSREPEPNRAPLARRESRP). Residues 109–185 (IREPEQNRNP…GENSDGCIIM (77 aa)) are disordered. C182 bears the Cysteine methyl ester mark. A lipid anchor (S-farnesyl cysteine) is attached at C182. A propeptide spans 183-185 (IIM) (removed in mature form).

It belongs to the HIPP family.

Probable heavy-metal-binding protein. This Arabidopsis thaliana (Mouse-ear cress) protein is Heavy metal-associated isoprenylated plant protein 11.